The primary structure comprises 209 residues: MIKEFCAENFTKIPQAIQKGANRIELCDNLAVGGTTPSTGVIEEVLAYAGEHSVPVMTIIRPRGGNFVYNDIELKIMHTDLIEAKKLGTDGIVIGCLTEDGWLDEEALDLFIETAEGLQITFHMAFDALSKENQFKAIDWLAERGVTRILTHGGPAGTPIEDNFDHLKELIVYADQRILILPGGGISTENVQTVMDTLKVTEVHGTKIV.

This sequence belongs to the CutC family.

Its subcellular location is the cytoplasm. Functionally, might participate in the control of copper homeostasis; data from other bacteria suggests it is not involved. This chain is PF03932 family protein CutC, found in Enterococcus faecalis (strain ATCC 700802 / V583).